The chain runs to 276 residues: Ribosomal RNA small subunit methyltransferase A (276 aa).

Residues N27, L29, G54, E75, D101, and N122 each contribute to the S-adenosyl-L-methionine site.

It belongs to the class I-like SAM-binding methyltransferase superfamily. rRNA adenine N(6)-methyltransferase family. RsmA subfamily.

The protein localises to the cytoplasm. The enzyme catalyses adenosine(1518)/adenosine(1519) in 16S rRNA + 4 S-adenosyl-L-methionine = N(6)-dimethyladenosine(1518)/N(6)-dimethyladenosine(1519) in 16S rRNA + 4 S-adenosyl-L-homocysteine + 4 H(+). In terms of biological role, specifically dimethylates two adjacent adenosines (A1518 and A1519) in the loop of a conserved hairpin near the 3'-end of 16S rRNA in the 30S particle. May play a critical role in biogenesis of 30S subunits. This chain is Ribosomal RNA small subunit methyltransferase A, found in Brucella abortus biovar 1 (strain 9-941).